The primary structure comprises 429 residues: Septin-11 (429 aa).

Residue alanine 2 is modified to N-acetylalanine. Serine 9 carries the phosphoserine modification. Positions 38–304 constitute a Septin-type G domain; the sequence is QGFCFNILCV…ELYRRCKLEE (267 aa). Residues 48 to 55 form a G1 motif region; sequence GETGIGKS. GTP contacts are provided by residues 48–55, glycine 103, 184–192, glycine 238, and arginine 253; these read GETGIGKS and KADTIAKNE. The interval 100 to 103 is G3 motif; sequence DTVG. The G4 motif stretch occupies residues 183-186; it reads AKAD. Positions 320–415 form a coiled coil; that stretch reads QETYEAKRNE…QSQAQQSGAQ (96 aa). The segment at 398 to 429 is disordered; sequence KKAAAQLLQSQAQQSGAQQTKKDKDKKNASFT. The span at 401 to 416 shows a compositional bias: low complexity; sequence AAQLLQSQAQQSGAQQ. A compositionally biased stretch (basic and acidic residues) spans 417–429; that stretch reads TKKDKDKKNASFT.

Belongs to the TRAFAC class TrmE-Era-EngA-EngB-Septin-like GTPase superfamily. Septin GTPase family. Septins polymerize into heterooligomeric protein complexes that form filaments, and can associate with cellular membranes, actin filaments and microtubules. Forms homooligomers. GTPase activity is required for filament formation. Interacts with SEPTIN7, SEPTIN9 and SEPTIN12. Widely expressed, except in leukocytes.

It is found in the cytoplasm. Its subcellular location is the cytoskeleton. The protein localises to the synapse. It localises to the cell projection. The protein resides in the dendritic spine. It is found in the axon. Filament-forming cytoskeletal GTPase. May play a role in cytokinesis (Potential). May play a role in the cytoarchitecture of neurons, including dendritic arborization and dendritic spines, and in GABAergic synaptic connectivity. During Listeria monocytogenes infection, not required for the bacterial entry process, but restricts its efficacy. The sequence is that of Septin-11 from Homo sapiens (Human).